The following is a 439-amino-acid chain: 3beta-hydroxysteroid-dehydrogenase/decarboxylase isoform 1 (439 aa).

16-21 is an NAD(+) binding site; that stretch reads GGRGFA. 2 N-linked (GlcNAc...) asparagine glycosylation sites follow: Asn75 and Asn158. NAD(+) contacts are provided by Tyr161 and Lys165. Lys165 acts as the Proton donor in catalysis. N-linked (GlcNAc...) asparagine glycosylation occurs at Asn327. One can recognise a Reticulon; atypical domain in the interval 371–439; sequence VTETIQWKKQ…MKVFGSKKID (69 aa). The next 2 helical transmembrane spans lie at 381 to 401 and 405 to 425; these read TLIA…TTGS and IITA…INGI.

The protein belongs to the 3-beta-HSD family.

The protein resides in the endoplasmic reticulum membrane. The enzyme catalyses a 3beta-hydroxysteroid-4alpha-carboxylate + NAD(+) = a 3-oxosteroid + CO2 + NADH. The catalysed reaction is 4alpha-carboxy-4beta,14alpha-dimethyl-9beta,19-cyclo-5alpha-ergost-24(24(1))-en-3beta-ol + NAD(+) = cycloeucalenone + CO2 + NADH. It participates in steroid biosynthesis; zymosterol biosynthesis; zymosterol from lanosterol: step 4/6. In terms of biological role, 3beta-hydroxysteroid-dehydrogenase/decarboxylase involved in sterol synthesis. Catalyzes the formation of 3-oxosteroids from 3beta-hydroxysteroids-4alpha-carboxylate. Involved in the regulation of inflorescence internodes and leaves growth, probably by affecting auxin transporter activity possibly by altering sterol composition in the membranes. In Arabidopsis thaliana (Mouse-ear cress), this protein is 3beta-hydroxysteroid-dehydrogenase/decarboxylase isoform 1.